Consider the following 445-residue polypeptide: Nuclear hormone receptor family member nhr-1 (445 aa).

The tract at residues 19-55 (PMVNSQRNEDPSMYMNGSAASVSHTNGSSSMGNDQKF) is disordered. Over residues 36–51 (SAASVSHTNGSSSMGN) the composition is skewed to polar residues. The segment at residues 70-145 (GELCAVCSDL…VGMDAKALQI (76 aa)) is a DNA-binding region (nuclear receptor). 2 consecutive NR C4-type zinc fingers follow at residues 73–93 (CAVC…CNGC) and 109–133 (CQYN…FNKC). The 266-residue stretch at 179 to 444 (QDQEIIDQLT…PFVKELCMKR (266 aa)) folds into the NR LBD domain.

The protein belongs to the nuclear hormone receptor family.

It is found in the nucleus. Its function is as follows. Orphan nuclear receptor which acts in concert with the insulin/IGF-1-like signaling (IIS) pathway during osmotic stress, perhaps in response to a ligand modified by the sulfotransferase ssu-1. The polypeptide is Nuclear hormone receptor family member nhr-1 (nhr-1) (Caenorhabditis elegans).